Here is a 367-residue protein sequence, read N- to C-terminus: MSVNRILVINPGSTSTKIGVFDNERPVLEETIRHDEEQIGKYKRIIDQYEFRKETILEVLHSHGINISKLNAVCGRGGLLRPIEGGTYTVNDAMLEDLKNGFSGHHASNLGGILAYEIASGLNIPAFIVDPVVVDEMEPIARISGIAGMERKSIFHALNQKAVARKVAEELNHKYEDLNLLVTHMGGGITVGAHKKGKVIDVNNGLNGEGPFSPERAGTVPVGQLVEMCFSGEYYRDEMVKKLVGQGGLVSLIGTNDAIKVEQMVEKGDPEATLIYKAMAYQVAKEIGGASAVLHGKIDAIVLTGGLAYSKILVDEIKERVDWIADVIVHPGEDELQALAEGALRVLREEEAPKEYIVREKETVARG.

Belongs to the acetokinase family.

The protein resides in the cytoplasm. The catalysed reaction is butanoate + ATP = butanoyl phosphate + ADP. This chain is Probable butyrate kinase, found in Bacillus anthracis (strain A0248).